The following is a 56-amino-acid chain: Large ribosomal subunit protein bL33C (56 aa).

The protein belongs to the bacterial ribosomal protein bL33 family.

The sequence is that of Large ribosomal subunit protein bL33C from Sorangium cellulosum (strain So ce56) (Polyangium cellulosum (strain So ce56)).